A 105-amino-acid polypeptide reads, in one-letter code: ATP-dependent Clp protease adapter protein ClpS (105 aa).

This sequence belongs to the ClpS family. As to quaternary structure, binds to the N-terminal domain of the chaperone ClpA.

Functionally, involved in the modulation of the specificity of the ClpAP-mediated ATP-dependent protein degradation. This is ATP-dependent Clp protease adapter protein ClpS from Klebsiella pneumoniae (strain 342).